A 444-amino-acid polypeptide reads, in one-letter code: Phosphoglucosamine mutase (444 aa).

S104 acts as the Phosphoserine intermediate in catalysis. Positions 104, 243, 245, and 247 each coordinate Mg(2+). S104 bears the Phosphoserine mark.

The protein belongs to the phosphohexose mutase family. The cofactor is Mg(2+). In terms of processing, activated by phosphorylation.

The catalysed reaction is alpha-D-glucosamine 1-phosphate = D-glucosamine 6-phosphate. Its function is as follows. Catalyzes the conversion of glucosamine-6-phosphate to glucosamine-1-phosphate. This chain is Phosphoglucosamine mutase, found in Neisseria meningitidis serogroup A / serotype 4A (strain DSM 15465 / Z2491).